A 725-amino-acid polypeptide reads, in one-letter code: Polyribonucleotide nucleotidyltransferase (725 aa).

Mg(2+) is bound by residues aspartate 506 and aspartate 512. The 61-residue stretch at 571-631 (PLIEQFAIDP…QNIIDACEHI (61 aa)) folds into the KH domain. In terms of domain architecture, S1 motif spans 657–724 (DEVVIGKVER…KKDRIELSSA (68 aa)).

Belongs to the polyribonucleotide nucleotidyltransferase family. Mg(2+) is required as a cofactor.

It is found in the cytoplasm. The catalysed reaction is RNA(n+1) + phosphate = RNA(n) + a ribonucleoside 5'-diphosphate. Its function is as follows. Involved in mRNA degradation. Catalyzes the phosphorolysis of single-stranded polyribonucleotides processively in the 3'- to 5'-direction. The protein is Polyribonucleotide nucleotidyltransferase of Aliarcobacter butzleri (strain RM4018) (Arcobacter butzleri).